Here is a 747-residue protein sequence, read N- to C-terminus: DNA topoisomerase 4 subunit A (747 aa).

The 464-residue stretch at 35–498 (LPFIGDGLKP…EAKMISESDM (464 aa)) folds into the Topo IIA-type catalytic domain. The active-site O-(5'-phospho-DNA)-tyrosine intermediate is the Y124.

Belongs to the type II topoisomerase GyrA/ParC subunit family. ParC type 1 subfamily. Heterotetramer composed of ParC and ParE.

Its subcellular location is the cell membrane. It catalyses the reaction ATP-dependent breakage, passage and rejoining of double-stranded DNA.. Its function is as follows. Topoisomerase IV is essential for chromosome segregation. It relaxes supercoiled DNA. Performs the decatenation events required during the replication of a circular DNA molecule. The polypeptide is DNA topoisomerase 4 subunit A (Haemophilus influenzae (strain ATCC 51907 / DSM 11121 / KW20 / Rd)).